The following is a 324-amino-acid chain: tRNA N6-adenosine threonylcarbamoyltransferase (324 aa).

Residues His107, His111, and Tyr127 each coordinate Fe cation. Residues 127–131 (YVSGG), Asp159, Gly172, Glu176, and Asn257 contribute to the substrate site. Asp285 is a binding site for Fe cation.

It belongs to the KAE1 / TsaD family. Monomer. Component of the KEOPS complex that consists of Kae1, Bud32, Cgi121 and Pcc1; the whole complex dimerizes. Fe(2+) is required as a cofactor.

It localises to the cytoplasm. The catalysed reaction is L-threonylcarbamoyladenylate + adenosine(37) in tRNA = N(6)-L-threonylcarbamoyladenosine(37) in tRNA + AMP + H(+). Functionally, required for the formation of a threonylcarbamoyl group on adenosine at position 37 (t(6)A37) in tRNAs that read codons beginning with adenine. Is a component of the KEOPS complex that is probably involved in the transfer of the threonylcarbamoyl moiety of threonylcarbamoyl-AMP (TC-AMP) to the N6 group of A37. Kae1 likely plays a direct catalytic role in this reaction, but requires other protein(s) of the complex to fulfill this activity. In vitro, binds tRNA, ssRNA, both single- and double-stranded DNA, and exhibits a low ATPase activity. This is tRNA N6-adenosine threonylcarbamoyltransferase from Pyrococcus abyssi (strain GE5 / Orsay).